The following is a 175-amino-acid chain: ATP synthase subunit delta (175 aa).

The protein belongs to the ATPase delta chain family. In terms of assembly, F-type ATPases have 2 components, F(1) - the catalytic core - and F(0) - the membrane proton channel. F(1) has five subunits: alpha(3), beta(3), gamma(1), delta(1), epsilon(1). F(0) has three main subunits: a(1), b(2) and c(10-14). The alpha and beta chains form an alternating ring which encloses part of the gamma chain. F(1) is attached to F(0) by a central stalk formed by the gamma and epsilon chains, while a peripheral stalk is formed by the delta and b chains.

It localises to the cell membrane. Its function is as follows. F(1)F(0) ATP synthase produces ATP from ADP in the presence of a proton or sodium gradient. F-type ATPases consist of two structural domains, F(1) containing the extramembraneous catalytic core and F(0) containing the membrane proton channel, linked together by a central stalk and a peripheral stalk. During catalysis, ATP synthesis in the catalytic domain of F(1) is coupled via a rotary mechanism of the central stalk subunits to proton translocation. This protein is part of the stalk that links CF(0) to CF(1). It either transmits conformational changes from CF(0) to CF(1) or is implicated in proton conduction. In Lactococcus lactis subsp. lactis (strain IL1403) (Streptococcus lactis), this protein is ATP synthase subunit delta.